We begin with the raw amino-acid sequence, 392 residues long: Probable tRNA sulfurtransferase (392 aa).

A THUMP domain is found at 63–169; it reads GRAADAAADT…DAEAFVFLTH (107 aa). ATP contacts are provided by residues 187-188, arginine 270, glycine 292, and glutamine 301; that span reads LV.

It belongs to the ThiI family.

The protein localises to the cytoplasm. The catalysed reaction is [ThiI sulfur-carrier protein]-S-sulfanyl-L-cysteine + a uridine in tRNA + 2 reduced [2Fe-2S]-[ferredoxin] + ATP + H(+) = [ThiI sulfur-carrier protein]-L-cysteine + a 4-thiouridine in tRNA + 2 oxidized [2Fe-2S]-[ferredoxin] + AMP + diphosphate. It carries out the reaction [ThiS sulfur-carrier protein]-C-terminal Gly-Gly-AMP + S-sulfanyl-L-cysteinyl-[cysteine desulfurase] + AH2 = [ThiS sulfur-carrier protein]-C-terminal-Gly-aminoethanethioate + L-cysteinyl-[cysteine desulfurase] + A + AMP + 2 H(+). It participates in cofactor biosynthesis; thiamine diphosphate biosynthesis. Its function is as follows. Catalyzes the ATP-dependent transfer of a sulfur to tRNA to produce 4-thiouridine in position 8 of tRNAs, which functions as a near-UV photosensor. Also catalyzes the transfer of sulfur to the sulfur carrier protein ThiS, forming ThiS-thiocarboxylate. This is a step in the synthesis of thiazole, in the thiamine biosynthesis pathway. The sulfur is donated as persulfide by IscS. This is Probable tRNA sulfurtransferase from Halobacterium salinarum (strain ATCC 29341 / DSM 671 / R1).